The sequence spans 183 residues: Glutathione-regulated potassium-efflux system ancillary protein KefG (183 aa).

It belongs to the NAD(P)H dehydrogenase (quinone) family. KefG subfamily. As to quaternary structure, interacts with KefB.

It is found in the cell inner membrane. The catalysed reaction is a quinone + NADH + H(+) = a quinol + NAD(+). It catalyses the reaction a quinone + NADPH + H(+) = a quinol + NADP(+). Its function is as follows. Regulatory subunit of a potassium efflux system that confers protection against electrophiles. Required for full activity of KefB. This is Glutathione-regulated potassium-efflux system ancillary protein KefG from Pectobacterium atrosepticum (strain SCRI 1043 / ATCC BAA-672) (Erwinia carotovora subsp. atroseptica).